We begin with the raw amino-acid sequence, 107 residues long: Ig kappa chain V-VI region J539 (107 aa).

The framework-1 stretch occupies residues 1-23 (EIVLTQSPAITAASLGQKVTITC). Cys23 and Cys87 are disulfide-bonded. Residues 24 to 33 (SASSSVSSLH) are complementarity-determining-1. Positions 34 to 48 (WYQQKSGTSPKPWIY) are framework-2. The complementarity-determining-2 stretch occupies residues 49–55 (EISKLAS). The interval 56–87 (GVPARFSGSGSGTSYSLTINTMEAEDAAIYYC) is framework-3. The complementarity-determining-3 stretch occupies residues 88–96 (QQWTYPLIT). The tract at residues 97–106 (FGAGTKLELK) is framework-4.

The polypeptide is Ig kappa chain V-VI region J539 (Mus musculus (Mouse)).